The sequence spans 138 residues: MLMPKRTKFRKQQKGQFAGLSKGATFVDFGEYAMQTLERGWVTSRQIEACRVAINRYLKRRGKVWIRIFPDKSVTKKPAETRMGKGKGAPDHWVAVVRPGRILFEVANVSKEDAQDALRRAAAKLGIKTRFVKRVERV.

This sequence belongs to the universal ribosomal protein uL16 family. In terms of assembly, part of the 50S ribosomal subunit.

In terms of biological role, binds 23S rRNA and is also seen to make contacts with the A and possibly P site tRNAs. In Chlamydia pneumoniae (Chlamydophila pneumoniae), this protein is Large ribosomal subunit protein uL16.